The primary structure comprises 159 residues: Trafficking protein particle complex subunit 6A (159 aa).

Residue Ser33 is modified to Phosphoserine.

Belongs to the TRAPP small subunits family. BET3 subfamily. As to quaternary structure, part of the multisubunit transport protein particle (TRAPP) complex. Heterodimer with TRAPPC3. The heterodimer TRAPPC3-TRAPPC6A interacts with TRAPPC2L. Interacts with TRAPPC2L.

The protein localises to the golgi apparatus. It localises to the cis-Golgi network. The protein resides in the endoplasmic reticulum. May play a role in vesicular transport during the biogenesis of melanosomes. The sequence is that of Trafficking protein particle complex subunit 6A from Homo sapiens (Human).